The chain runs to 86 residues: Neurotoxin LmNaTx1 (86 aa).

The N-terminal stretch at 1–18 (MKILIIFVIAITVVGVQS) is a signal peptide. Positions 19-85 (KDGYPIYSTG…VWTYAENTCG (67 aa)) constitute an LCN-type CS-alpha/beta domain. 4 disulfide bridges follow: Cys-33–Cys-84, Cys-37–Cys-58, Cys-44–Cys-65, and Cys-48–Cys-67. The residue at position 84 (Cys-84) is a Cysteine amide.

The protein belongs to the long (4 C-C) scorpion toxin superfamily. Sodium channel inhibitor family. Beta subfamily. As to expression, expressed by the venom gland.

The protein localises to the secreted. Its function is as follows. Binds voltage-independently at site-4 of sodium channels (Nav) and shift the voltage of activation toward more negative potentials thereby affecting sodium channel activation and promoting spontaneous and repetitive firing. In Lychas mucronatus (Chinese swimming scorpion), this protein is Neurotoxin LmNaTx1.